The primary structure comprises 290 residues: Elongation factor Ts, mitochondrial 1 (290 aa).

The protein belongs to the EF-Ts family.

Its subcellular location is the mitochondrion. In terms of biological role, associates with the EF-Tu.GDP complex and induces the exchange of GDP to GTP. It remains bound to the aminoacyl-tRNA.EF-Tu.GTP complex up to the GTP hydrolysis stage on the ribosome. This Postia placenta (strain ATCC 44394 / Madison 698-R) (Brown rot fungus) protein is Elongation factor Ts, mitochondrial 1.